The primary structure comprises 330 residues: Probable WRKY transcription factor 39 (330 aa).

Residues 256–322 (KIADIPPDEY…YEGEHNHSRI (67 aa)) constitute a DNA-binding region (WRKY).

The protein resides in the nucleus. Transcription factor. Interacts specifically with the W box (5'-(T)TGAC[CT]-3'), a frequently occurring elicitor-responsive cis-acting element. The sequence is that of Probable WRKY transcription factor 39 (WRKY39) from Arabidopsis thaliana (Mouse-ear cress).